A 360-amino-acid chain; its full sequence is Histidinol-phosphate aminotransferase (360 aa).

Residue Lys-222 is modified to N6-(pyridoxal phosphate)lysine.

It belongs to the class-II pyridoxal-phosphate-dependent aminotransferase family. Histidinol-phosphate aminotransferase subfamily. Homodimer. Pyridoxal 5'-phosphate is required as a cofactor.

It carries out the reaction L-histidinol phosphate + 2-oxoglutarate = 3-(imidazol-4-yl)-2-oxopropyl phosphate + L-glutamate. Its pathway is amino-acid biosynthesis; L-histidine biosynthesis; L-histidine from 5-phospho-alpha-D-ribose 1-diphosphate: step 7/9. The chain is Histidinol-phosphate aminotransferase from Listeria monocytogenes serotype 4b (strain F2365).